Here is a 489-residue protein sequence, read N- to C-terminus: GTPase Der (489 aa).

2 consecutive EngA-type G domains span residues 3 to 166 (PVVA…FDDV) and 201 to 374 (IKLA…DSST). GTP is bound by residues 9–16 (GRPNVGKS), 56–60 (DTGGI), 118–121 (NKTD), 207–214 (GRPNVGKS), 254–258 (DTAGV), and 319–322 (NKWD). A KH-like domain is found at 375–459 (KRISTSILTR…PIRIEFREGT (85 aa)).

This sequence belongs to the TRAFAC class TrmE-Era-EngA-EngB-Septin-like GTPase superfamily. EngA (Der) GTPase family. Associates with the 50S ribosomal subunit.

Its function is as follows. GTPase that plays an essential role in the late steps of ribosome biogenesis. The protein is GTPase Der of Psychromonas ingrahamii (strain DSM 17664 / CCUG 51855 / 37).